The chain runs to 186 residues: Crossover junction endodeoxyribonuclease RuvC (186 aa).

Active-site residues include Asp7, Glu73, and Asp145. Mg(2+) is bound by residues Asp7, Glu73, and Asp145.

The protein belongs to the RuvC family. In terms of assembly, homodimer which binds Holliday junction (HJ) DNA. The HJ becomes 2-fold symmetrical on binding to RuvC with unstacked arms; it has a different conformation from HJ DNA in complex with RuvA. In the full resolvosome a probable DNA-RuvA(4)-RuvB(12)-RuvC(2) complex forms which resolves the HJ. The cofactor is Mg(2+).

The protein resides in the cytoplasm. The catalysed reaction is Endonucleolytic cleavage at a junction such as a reciprocal single-stranded crossover between two homologous DNA duplexes (Holliday junction).. The RuvA-RuvB-RuvC complex processes Holliday junction (HJ) DNA during genetic recombination and DNA repair. Endonuclease that resolves HJ intermediates. Cleaves cruciform DNA by making single-stranded nicks across the HJ at symmetrical positions within the homologous arms, yielding a 5'-phosphate and a 3'-hydroxyl group; requires a central core of homology in the junction. The consensus cleavage sequence is 5'-(A/T)TT(C/G)-3'. Cleavage occurs on the 3'-side of the TT dinucleotide at the point of strand exchange. HJ branch migration catalyzed by RuvA-RuvB allows RuvC to scan DNA until it finds its consensus sequence, where it cleaves and resolves the cruciform DNA. The polypeptide is Crossover junction endodeoxyribonuclease RuvC (Acidovorax sp. (strain JS42)).